The sequence spans 445 residues: Tubulin beta-4B chain (445 aa).

The MREI motif signature appears at 1–4 (MREI). Position 11 (Gln-11) interacts with GTP. Thr-55 bears the Phosphothreonine mark. Lys-58 is modified (N6-acetyllysine). Residues Glu-69, Ser-138, Gly-142, Thr-143, and Gly-144 each coordinate GTP. Residue Glu-69 participates in Mg(2+) binding. Residue Ser-172 is modified to Phosphoserine; by CDK1. Positions 204 and 226 each coordinate GTP. The disordered stretch occupies residues 426-445 (QDATAEEEGEFEEEAEEEVA). Positions 429–445 (TAEEEGEFEEEAEEEVA) are enriched in acidic residues. Glu-438 is subject to 5-glutamyl polyglutamate.

Belongs to the tubulin family. Dimer of alpha and beta chains. A typical microtubule is a hollow water-filled tube with an outer diameter of 25 nm and an inner diameter of 15 nM. Alpha-beta heterodimers associate head-to-tail to form protofilaments running lengthwise along the microtubule wall with the beta-tubulin subunit facing the microtubule plus end conferring a structural polarity. Microtubules usually have 13 protofilaments but different protofilament numbers can be found in some organisms and specialized cells. Component of sperm flagellar doublet microtubules. Mg(2+) is required as a cofactor. Some glutamate residues at the C-terminus are polyglycylated, resulting in polyglycine chains on the gamma-carboxyl group. Glycylation is mainly limited to tubulin incorporated into axonemes (cilia and flagella) whereas glutamylation is prevalent in neuronal cells, centrioles, axonemes, and the mitotic spindle. Both modifications can coexist on the same protein on adjacent residues, and lowering polyglycylation levels increases polyglutamylation, and reciprocally. Cilia and flagella glycylation is required for their stability and maintenance. Flagella glycylation controls sperm motility. Post-translationally, some glutamate residues at the C-terminus are polyglutamylated, resulting in polyglutamate chains on the gamma-carboxyl group. Polyglutamylation plays a key role in microtubule severing by spastin (SPAST). SPAST preferentially recognizes and acts on microtubules decorated with short polyglutamate tails: severing activity by SPAST increases as the number of glutamates per tubulin rises from one to eight, but decreases beyond this glutamylation threshold. Glutamylation is also involved in cilia motility. In terms of processing, phosphorylated on Ser-172 by CDK1 during the cell cycle, from metaphase to telophase, but not in interphase. This phosphorylation inhibits tubulin incorporation into microtubules.

Its subcellular location is the cytoplasm. The protein localises to the cytoskeleton. It localises to the flagellum axoneme. Tubulin is the major constituent of microtubules, a cylinder consisting of laterally associated linear protofilaments composed of alpha- and beta-tubulin heterodimers. Microtubules grow by the addition of GTP-tubulin dimers to the microtubule end, where a stabilizing cap forms. Below the cap, tubulin dimers are in GDP-bound state, owing to GTPase activity of alpha-tubulin. The polypeptide is Tubulin beta-4B chain (Tubb4b) (Rattus norvegicus (Rat)).